The primary structure comprises 809 residues: BTB/POZ domain-containing protein At2g30600 (809 aa).

BTB domains lie at 211–273 (SDTV…QILE) and 351–420 (SDIK…NMED). Residues 466 to 537 (VVSSISSCKL…LMWCMKAEES (72 aa)) form the BACK domain.

It participates in protein modification; protein ubiquitination. In terms of biological role, may act as a substrate-specific adapter of an E3 ubiquitin-protein ligase complex (CUL3-RBX1-BTB) which mediates the ubiquitination and subsequent proteasomal degradation of target proteins. In Arabidopsis thaliana (Mouse-ear cress), this protein is BTB/POZ domain-containing protein At2g30600.